The following is a 114-amino-acid chain: Large ribosomal subunit protein bL19 (114 aa).

It belongs to the bacterial ribosomal protein bL19 family.

Functionally, this protein is located at the 30S-50S ribosomal subunit interface and may play a role in the structure and function of the aminoacyl-tRNA binding site. This Lactococcus lactis subsp. cremoris (strain MG1363) protein is Large ribosomal subunit protein bL19.